Consider the following 819-residue polypeptide: FYN-binding protein 1 (819 aa).

Positions 1-45 (MAKFNTGSNPTEEAATSSRPFKVAGQSSPSGIQSRKNLFDNQGNA) are enriched in polar residues. Residues 1–490 (MAKFNTGSNP…REKKEQELKK (490 aa)) are disordered. An N6-acetyllysine modification is found at Lys-3. Residues Ser-28 and Ser-46 each carry the phosphoserine modification. Over residues 69-79 (TYEEKPEKEPK) the composition is skewed to basic and acidic residues. A compositionally biased stretch (pro residues) spans 150 to 160 (GPKPGPAPPVP). Position 222 is a phosphoserine (Ser-222). Composition is skewed to basic and acidic residues over residues 237 to 248 (PPKEDPEDKDHG) and 273 to 285 (NFEEKKEDRKTDL). Ser-318 bears the Phosphoserine mark. Composition is skewed to pro residues over residues 342–351 (GPPPPKPNRP) and 380–412 (LPPPPPTHPASQPPLPASHPAHPPVPSLPPRNI). Over residues 439 to 453 (LEEEQESEGETYEDI) the composition is skewed to acidic residues. The residue at position 445 (Ser-445) is a Phosphoserine. A coiled-coil region spans residues 448 to 495 (ETYEDIDSSKERDKKREKEEKKRLELERKEQKEREKKEQELKKKFKLT). The span at 454-489 (DSSKERDKKREKEEKKRLELERKEQKEREKKEQELK) shows a compositional bias: basic and acidic residues. Positions 479 to 493 (KEREKKEQELKKKFK) match the Nuclear localization signal motif. The 62-residue stretch at 499–560 (QVIHHAKACC…KTTAVEIDYD (62 aa)) folds into the SH3 1 domain. Tyr-559 bears the Phosphotyrosine mark. Phosphoserine is present on residues Ser-561 and Ser-568. Positions 584–587 (YDDV) match the SH2-binding; to LCP2 motif. 2 disordered regions span residues 589–635 (EQDA…DEKT) and 649–728 (KDDR…EKEE). Positions 610-626 (TDDEIYDGIEEEDDDDG) are enriched in acidic residues. Positions 615–618 (YDGI) match the SH2-binding; to FYN motif. Over residues 649-664 (KDDRKKSIREKPKVSE) the composition is skewed to basic and acidic residues. A compositionally biased stretch (polar residues) spans 668 to 677 (NEGSSLPSQH). A compositionally biased stretch (acidic residues) spans 682–692 (VGEEVYDDVDA). Position 687 is a phosphotyrosine (Tyr-687). A Nuclear localization signal motif is present at residues 710-736 (RAKTEEKDPKKLKKQEKEEKDLRKKFK). Over residues 711-728 (AKTEEKDPKKLKKQEKEE) the composition is skewed to basic and acidic residues. The SH3 2 domain occupies 736 to 804 (KYDGEIRVLY…LRSYLVDNDG (69 aa)).

In terms of assembly, part of a complex consisting of SKAP2, FYB1 and PTPNS1. Part of a complex consisting of SKAP2, FYB1 and PIRB. Part of a complex consisting of SKAP1, FYB1 and CLNK. Interacts with CLNK (via its SH2 domain); this interaction allows SKAP1 and FYB1 to recruit FYN to the complex, thus promoting the phosphorylation of CLNK by FYN. Interacts with FYN. Interacts with LCP2. Interacts with SKAP1. Interacts with SKAP2. Interacts with FASLG. Interacts with EVL. Interacts with TMEM47. Interacts with LCK. T-cell receptor ligation leads to increased tyrosine phosphorylation. As to expression, expressed in hematopoietic tissues such as myeloid and T-cells, spleen and thymus. Not expressed in B-cells, nor in non-lymphoid tissues. FYB-130 is preferentially expressed in mature T-cells compared to FYB-120, whereas thymocytes showed a greater relative amount of FYB-120. Expressed in podocytes.

It localises to the cytoplasm. The protein localises to the nucleus. Its subcellular location is the cell junction. Its function is as follows. Acts as an adapter protein of the FYN and LCP2 signaling cascades in T-cells. May play a role in linking T-cell signaling to remodeling of the actin cytoskeleton. Modulates the expression of IL2. Involved in platelet activation. Prevents the degradation of SKAP1 and SKAP2. May be involved in high affinity immunoglobulin epsilon receptor signaling in mast cells. The sequence is that of FYN-binding protein 1 (Fyb1) from Mus musculus (Mouse).